The primary structure comprises 318 residues: MSLNFLDFEQPIAELEAQIEELKSVGNRGQLDLNLEEEVQRLTTKSQELTEKIFSDLGAWQVAQLARHPLRPYTLDYIRMIFTEFDEMAGDRSFANDEAIVGGIARLDGTPVMVIGQQKGRETKEKIRRNFGMPKPEGYRKALRLMQTAERFKMPIVTFIDTPGAYPGIGAEERGQSEAIARNLKVMARLTVPIVCTVIGEGGSGGALAIGVGDRVNMLQYSTYSVISPEGCASILWKSASKAPLAAEAMGVTAERSKELGLVDSVIPEPLGGAHRHQEEMAVRLKRQLIADLGSLQGLSHEELLDQRYRKLMSFGYC.

In terms of domain architecture, CoA carboxyltransferase C-terminal spans 41 to 295; sequence RLTTKSQELT…KRQLIADLGS (255 aa).

This sequence belongs to the AccA family. Acetyl-CoA carboxylase is a heterohexamer composed of biotin carboxyl carrier protein (AccB), biotin carboxylase (AccC) and two subunits each of ACCase subunit alpha (AccA) and ACCase subunit beta (AccD).

Its subcellular location is the cytoplasm. It carries out the reaction N(6)-carboxybiotinyl-L-lysyl-[protein] + acetyl-CoA = N(6)-biotinyl-L-lysyl-[protein] + malonyl-CoA. It participates in lipid metabolism; malonyl-CoA biosynthesis; malonyl-CoA from acetyl-CoA: step 1/1. In terms of biological role, component of the acetyl coenzyme A carboxylase (ACC) complex. First, biotin carboxylase catalyzes the carboxylation of biotin on its carrier protein (BCCP) and then the CO(2) group is transferred by the carboxyltransferase to acetyl-CoA to form malonyl-CoA. This is Acetyl-coenzyme A carboxylase carboxyl transferase subunit alpha from Idiomarina loihiensis (strain ATCC BAA-735 / DSM 15497 / L2-TR).